The chain runs to 845 residues: MNEDSRLSSSQQPSTSTPRSSIPSTMNSDEPNTCRRLSQSQEQPSTSRTCKSETPEFGYSDSLPFAPWRRKRYGLNIQGLHEEIVDMYHWIKPNEIESRLRTKVFEKVRDSVLRRWKQKTIKISMFGSLRTNLFLPTSDIDVLVECDDWVGTPGDWLAETARGLEADNIAESVMVYGGAFVPIVKMVDRDTRLSIDISFNTVQGVRAASYIAKVKEEFPLIEPLVLLLKQFLHYRNLNQTFTGGLSSYGLVLLLVNFFQLYALNMRSRTIYDRGVNLGHLLLRFLELYSLEFNFEEMGISPGQCCYIPKSASGARYGHKQAQPGNLALEDPLLTANDVGRSTYNFSSIANAFGQAFQILLVAVTLRERKGKNHVAMRAYKGSLLHLIMPFTSKELTYRNWLMSGVLSMPGQEAPASYDLNQLHNTLVSPMVDLSRYAWLRKAPAKAEKRDSRPLTIVNPADDRQTLAQQLKKQILEQTEAKKSLEKMPACDDNKKEEELVATRETDVELEAEDTESEGHHNGENDLILTGPPLPTSTQSVNTSATVSTAASISEREDTDSPGLSSSMGNQSSEEDEDNGINNRNNSAVPVQFKKPFNEVVAQPARESKRTQTTSEDKMQDQFHFNGYSYPPPSRYAAGTAAPSHKHRNAHPQRQRPSIRNLSQGSDGSDEYNVESWNNNIRQGRRASSNSPSPSRQQTNTRNCGPTNNIPYDSFRSQNKNSTLDGSNNSSEEPITMYADVVKKKSSITTSTNTSTADVNVTNGNPIPANGIIPQSMAVVNVGRGSYRNALTTSPMTPPSAHTSMQKQHHLRKDNECGFDNNSATSSTDLSHHQPQLVPPVNRLQR.

The segment at 1-55 (MNEDSRLSSSQQPSTSTPRSSIPSTMNSDEPNTCRRLSQSQEQPSTSRTCKSETP) is disordered. Residues 7 to 25 (LSSSQQPSTSTPRSSIPST) are compositionally biased toward low complexity. Polar residues predominate over residues 26 to 49 (MNSDEPNTCRRLSQSQEQPSTSRT). Residues aspartate 139 and aspartate 141 each contribute to the Mg(2+) site. The PAP-associated domain maps to 276-335 (NLGHLLLRFLELYSLEFNFEEMGISPGQCCYIPKSASGARYGHKQAQPGNLALEDPLLTA). Residues 482–506 (KSLEKMPACDDNKKEEELVATRETD) are compositionally biased toward basic and acidic residues. 2 disordered regions span residues 482–733 (KSLE…SEEP) and 788–845 (NALT…RLQR). The segment covering 535-551 (TSTQSVNTSATVSTAAS) has biased composition (low complexity). 2 stretches are compositionally biased toward polar residues: residues 561–571 (PGLSSSMGNQS) and 579–588 (GINNRNNSAV). Positions 605–620 (RESKRTQTTSEDKMQD) are enriched in basic and acidic residues. Residues 643–653 (SHKHRNAHPQR) are compositionally biased toward basic residues. Polar residues-rich tracts occupy residues 654–666 (QRPSIRNLSQGSD), 695–732 (RQQTNTRNCGPTNNIPYDSFRSQNKNSTLDGSNNSSEE), 788–805 (NALTTSPMTPPSAHTSMQ), and 819–828 (DNNSATSSTD).

In terms of assembly, interacts with gls-1 isoform C. Mg(2+) serves as cofactor. Mn(2+) is required as a cofactor. In terms of tissue distribution, germline-specific.

It is found in the cytoplasm. The protein resides in the cytoplasmic granule. Its subcellular location is the perinuclear region. It catalyses the reaction RNA(n) + ATP = RNA(n)-3'-adenine ribonucleotide + diphosphate. Functionally, cytoplasmic poly(A) RNA polymerase that adds successive AMP monomers to the 3'-end of specific RNAs, forming a poly(A) tail. The enzymatic activity is enhanced by its interaction with gls-1. Required, together with gld-2, for early meiotic progression in male and female germ cells and for gld-1 protein accumulation in the hermaphrodite germline. In the germline, forms a complex with gls-1 which directly binds to gld-1 mRNA and prevents its degradation. The protein is Poly(A) RNA polymerase gld-4 of Caenorhabditis elegans.